We begin with the raw amino-acid sequence, 111 residues long: Nucleoid-associated protein PputW619_3586 (111 aa).

A disordered region spans residues 87–111 (EQSSQEKMGGMTAGMQLPPGFKMPF).

Belongs to the YbaB/EbfC family. In terms of assembly, homodimer.

It localises to the cytoplasm. The protein localises to the nucleoid. Its function is as follows. Binds to DNA and alters its conformation. May be involved in regulation of gene expression, nucleoid organization and DNA protection. This Pseudomonas putida (strain W619) protein is Nucleoid-associated protein PputW619_3586.